Consider the following 248-residue polypeptide: MLIILTGLPGVGKSTFSKNLAKILSKNNIDVIVLGSDLIRESFPVWKEKYEEFIKKSTYRLIDSALKNYWVIVDDTNYYNSMRRDLINIAKKYNKNYAIIYLKASLDVLIRRNIERGEKIPNEVIKKMYEKFDEPGKKYKWDEPFLIIDTTKDIDFNEIAKKLIEKSKEIPKFYVLEENKNKNNNISDKIDKETRKIVSEYIKSKKLDKDKIKEVVELRKEFLKKIKKMEEVDADRVLKEFKDLLNSY.

Residue Gly7–Ser14 participates in ATP binding.

It belongs to the L-seryl-tRNA(Sec) kinase family.

It carries out the reaction L-seryl-tRNA(Sec) + ATP = O-phospho-L-seryl-tRNA(Sec) + ADP. Its pathway is aminoacyl-tRNA biosynthesis; selenocysteinyl-tRNA(Sec) biosynthesis; selenocysteinyl-tRNA(Sec) from L-seryl-tRNA(Sec) (archaeal/eukaryal route): step 1/2. Its function is as follows. Specifically phosphorylates seryl-tRNA(Sec) to O-phosphoseryl-tRNA(Sec), an activated intermediate for selenocysteine biosynthesis. This Methanocaldococcus jannaschii (strain ATCC 43067 / DSM 2661 / JAL-1 / JCM 10045 / NBRC 100440) (Methanococcus jannaschii) protein is L-seryl-tRNA(Sec) kinase (pstK).